We begin with the raw amino-acid sequence, 467 residues long: NALCN channel auxiliary factor 1 (467 aa).

Residues 40-60 form a helical membrane-spanning segment; sequence LSLASLLFFTVLLSDHLWFCA. Residues 121-161 form a disordered region; that stretch reads MGESSPAAQAHRLLSASSSPTLPPSPGGGGGSKGNRGKNNR. N-linked (GlcNAc...) asparagine glycans are attached at residues Asn160, Asn226, and Asn254. Intrachain disulfides connect Cys200–Cys270, Cys235–Cys322, Cys255–Cys270, Cys313–Cys350, Cys333–Cys386, Cys339–Cys385, and Cys343–Cys370. Residues 390 to 408 show a composition bias toward basic and acidic residues; the sequence is SEEQTAPRPKGTVDRRDSC. The segment at 390–409 is disordered; that stretch reads SEEQTAPRPKGTVDRRDSCP. The chain crosses the membrane as a helical span at residues 426–446; the sequence is LKLCVLVLILLHTVLTASAAQ. Residue Asn462 is glycosylated (N-linked (GlcNAc...) asparagine).

The protein belongs to the NALF family. Component of the NALCN channel complex. NALCN complex consists of NALCN and auxiliary subunits, UNC79, UNC80 and NACL1. These auxiliary subunits are essential for the NALCN channel function.

It localises to the cell membrane. Functionally, auxillary component of the NALCN sodium channel complex, a channel that regulates the resting membrane potential and controls neuronal excitability. The sequence is that of NALCN channel auxiliary factor 1 from Mus musculus (Mouse).